The following is a 152-amino-acid chain: Protein Smg homolog (152 aa).

Belongs to the Smg family.

In Bordetella bronchiseptica (strain ATCC BAA-588 / NCTC 13252 / RB50) (Alcaligenes bronchisepticus), this protein is Protein Smg homolog.